Here is a 107-residue protein sequence, read N- to C-terminus: Iron-binding protein IscA (107 aa).

Fe cation is bound by residues Cys35, Cys99, and Cys101.

It belongs to the HesB/IscA family. In terms of assembly, homodimer; may form tetramers and higher multimers. The cofactor is Fe cation.

Functionally, is able to transfer iron-sulfur clusters to apo-ferredoxin. Multiple cycles of [2Fe2S] cluster formation and transfer are observed, suggesting that IscA acts catalytically. Recruits intracellular free iron so as to provide iron for the assembly of transient iron-sulfur cluster in IscU in the presence of IscS, L-cysteine and the thioredoxin reductase system TrxA/TrxB. This chain is Iron-binding protein IscA, found in Serratia proteamaculans (strain 568).